We begin with the raw amino-acid sequence, 115 residues long: UPF0122 protein NT01CX_2214 (115 aa).

The protein belongs to the UPF0122 family.

Functionally, might take part in the signal recognition particle (SRP) pathway. This is inferred from the conservation of its genetic proximity to ftsY/ffh. May be a regulatory protein. The chain is UPF0122 protein NT01CX_2214 from Clostridium novyi (strain NT).